The following is a 676-amino-acid chain: Probable potassium transport system protein Kup (676 aa).

The next 12 helical transmembrane spans lie at 14–34, 56–76, 97–117, 142–162, 173–193, 219–239, 252–272, 296–316, 345–365, 376–396, 402–422, and 429–449; these read GLLIAIGIVYGDIGTSPLYVM, ISLILWTVTLLTTVQTVIIAL, AAWLVWPALIGGAAILADGTL, VSNQTTVLVITIVILLVLFSI, AFGPIMLVWFAFLGVMGLINI, AGFAILGSIFLATTGAEALYS, SWPFVFVCLSLNYFGQGVWIL, LASIVLATLAAIIASQALITG, IYIPAVNKMLGITTIALVLFF, GLSITISMLTTTILLYEWLVL, LANLLFVIFFSTINILFMGSS, and GGYVSLLITLLIASVMVVWYF.

The protein belongs to the HAK/KUP transporter (TC 2.A.72) family.

It localises to the cell membrane. The enzyme catalyses K(+)(in) + H(+)(in) = K(+)(out) + H(+)(out). Its function is as follows. Transport of potassium into the cell. Likely operates as a K(+):H(+) symporter. This is Probable potassium transport system protein Kup from Lactobacillus delbrueckii subsp. bulgaricus (strain ATCC BAA-365 / Lb-18).